The primary structure comprises 442 residues: D-serine dehydratase (442 aa).

Lys-118 is subject to N6-(pyridoxal phosphate)lysine.

Belongs to the serine/threonine dehydratase family. DsdA subfamily. In terms of assembly, monomer. It depends on pyridoxal 5'-phosphate as a cofactor.

It carries out the reaction D-serine = pyruvate + NH4(+). The protein is D-serine dehydratase of Shigella sonnei (strain Ss046).